Consider the following 143-residue polypeptide: Putative transmembrane protein ORF32 (143 aa).

Transmembrane regions (helical) follow at residues 20-42 (GISG…SFTL) and 52-74 (WPLI…EGGV).

Its subcellular location is the host membrane. The protein is Putative transmembrane protein ORF32 of Haloarcula hispanica (His1V).